Reading from the N-terminus, the 594-residue chain is Cryptochrome-2 (594 aa).

Positions 21 to 150 (ASSVHWFRKG…EVVTENSHTL (130 aa)) constitute a Photolyase/cryptochrome alpha/beta domain. Residue lysine 29 forms a Glycyl lysine isopeptide (Lys-Gly) (interchain with G-Cter in ubiquitin) linkage. Residue serine 89 is modified to Phosphoserine. Glycyl lysine isopeptide (Lys-Gly) (interchain with G-Cter in ubiquitin) cross-links involve residues lysine 125 and lysine 241. At serine 265 the chain carries Phosphoserine; by MAPK. Serine 270 lines the FAD pocket. Phosphoserine is present on serine 298. An FAD-binding site is contributed by glutamine 307. A Glycyl lysine isopeptide (Lys-Gly) (interchain with G-Cter in ubiquitin) cross-link involves residue lysine 347. FAD is bound by residues histidine 373 and 405-407 (DAD). Positions 389–488 (WVSWESGVRV…IIGVDYPRPI (100 aa)) are required for inhibition of CLOCK-BMAL1-mediated transcription. Residues lysine 474 and lysine 503 each participate in a glycyl lysine isopeptide (Lys-Gly) (interchain with G-Cter in ubiquitin) cross-link. The segment at 532–594 (VAEPGSSQAG…PAQEPPSKDS (63 aa)) is disordered. Residues 536-547 (GSSQAGSISNTG) show a composition bias toward polar residues. The residue at position 553 (serine 553) is a Phosphoserine; by GSK3-beta. The residue at position 557 (serine 557) is a Phosphoserine; by DYRK1A and MAPK.

This sequence belongs to the DNA photolyase class-1 family. In terms of assembly, component of the circadian core oscillator, which includes the CRY proteins, CLOCK or NPAS2, BMAL1 or BMAL2, CSNK1D and/or CSNK1E, TIMELESS, and the PER proteins. Interacts with TIMELESS. Interacts directly with PER1, PER2 and PER3; interaction with PER2 inhibits its ubiquitination and vice versa. Interacts with CLOCK-BMAL1. Interacts with CLOCK. Interacts with BMAL1. Interacts with NFIL3. Interacts with FBXL3 and FBXL21. FBXL3, PER2 and the cofactor FAD compete for overlapping binding sites. FBXL3 cannot bind CRY2 that interacts already with PER2 or that contains bound FAD. Interacts with PPP5C (via TPR repeats); the interaction down-regulates the PPP5C phosphatase activity on CSNK1E. Interacts with nuclear receptors AR and NR3C1/GR; the interaction is ligand dependent. Interacts with PRKDC and CIART. Interacts with DDB1, USP7 and TARDBP. Interacts with HNF4A and PPARA. Interacts with PPARD (via domain NR LBD) and NR1I2 (via domain NR LBD) in a ligand-dependent manner. Interacts with PPARG, NR1I3 and VDR in a ligand-dependent manner. The cofactor is FAD. It depends on (6R)-5,10-methylene-5,6,7,8-tetrahydrofolate as a cofactor. In terms of processing, phosphorylation on Ser-265 by MAPK is important for the inhibition of CLOCK-BMAL1-mediated transcriptional activity. Phosphorylation by CSKNe requires interaction with PER1 or PER2. Phosphorylated in a circadian manner at Ser-553 and Ser-557 in the suprachiasmatic nucleus (SCN) and liver. Phosphorylation at Ser-557 by DYRK1A promotes subsequent phosphorylation at Ser-553 by GSK3-beta: the two-step phosphorylation at the neighboring Ser residues leads to its proteasomal degradation. Post-translationally, ubiquitinated by the SCF(FBXL3) and SCF(FBXL21) complexes, regulating the balance between degradation and stabilization. The SCF(FBXL3) complex is mainly nuclear and mediates ubiquitination and subsequent degradation of CRY2. In contrast, cytoplasmic SCF(FBXL21) complex-mediated ubiquitination leads to stabilize CRY2 and counteract the activity of the SCF(FBXL3) complex. The SCF(FBXL3) and SCF(FBXL21) complexes probably mediate ubiquitination at different Lys residues. The SCF(FBXL3) complex recognizes and binds CRY2 phosphorylated at Ser-553 and Ser-557. Ubiquitination may be inhibited by PER2. Deubiquitinated by USP7. In terms of tissue distribution, expressed in all tissues examined including heart, cerebellum, cerebral cortex, lung, liver, muscle, kidney and ovary. Highest levels in heart, liver and ovary. Highly expressed in the suprachiasmatic nucleus (SCN).

It is found in the cytoplasm. The protein localises to the nucleus. In terms of biological role, transcriptional repressor which forms a core component of the circadian clock. The circadian clock, an internal time-keeping system, regulates various physiological processes through the generation of approximately 24 hour circadian rhythms in gene expression, which are translated into rhythms in metabolism and behavior. It is derived from the Latin roots 'circa' (about) and 'diem' (day) and acts as an important regulator of a wide array of physiological functions including metabolism, sleep, body temperature, blood pressure, endocrine, immune, cardiovascular, and renal function. Consists of two major components: the central clock, residing in the suprachiasmatic nucleus (SCN) of the brain, and the peripheral clocks that are present in nearly every tissue and organ system. Both the central and peripheral clocks can be reset by environmental cues, also known as Zeitgebers (German for 'timegivers'). The predominant Zeitgeber for the central clock is light, which is sensed by retina and signals directly to the SCN. The central clock entrains the peripheral clocks through neuronal and hormonal signals, body temperature and feeding-related cues, aligning all clocks with the external light/dark cycle. Circadian rhythms allow an organism to achieve temporal homeostasis with its environment at the molecular level by regulating gene expression to create a peak of protein expression once every 24 hours to control when a particular physiological process is most active with respect to the solar day. Transcription and translation of core clock components (CLOCK, NPAS2, BMAL1, BMAL2, PER1, PER2, PER3, CRY1 and CRY2) plays a critical role in rhythm generation, whereas delays imposed by post-translational modifications (PTMs) are important for determining the period (tau) of the rhythms (tau refers to the period of a rhythm and is the length, in time, of one complete cycle). A diurnal rhythm is synchronized with the day/night cycle, while the ultradian and infradian rhythms have a period shorter and longer than 24 hours, respectively. Disruptions in the circadian rhythms contribute to the pathology of cardiovascular diseases, cancer, metabolic syndromes and aging. A transcription/translation feedback loop (TTFL) forms the core of the molecular circadian clock mechanism. Transcription factors, CLOCK or NPAS2 and BMAL1 or BMAL2, form the positive limb of the feedback loop, act in the form of a heterodimer and activate the transcription of core clock genes and clock-controlled genes (involved in key metabolic processes), harboring E-box elements (5'-CACGTG-3') within their promoters. The core clock genes: PER1/2/3 and CRY1/2 which are transcriptional repressors form the negative limb of the feedback loop and interact with the CLOCK|NPAS2-BMAL1|BMAL2 heterodimer inhibiting its activity and thereby negatively regulating their own expression. This heterodimer also activates nuclear receptors NR1D1/2 and RORA/B/G, which form a second feedback loop and which activate and repress BMAL1 transcription, respectively. CRY1 and CRY2 have redundant functions but also differential and selective contributions at least in defining the pace of the SCN circadian clock and its circadian transcriptional outputs. Less potent transcriptional repressor in cerebellum and liver than CRY1, though less effective in lengthening the period of the SCN oscillator. Seems to play a critical role in tuning SCN circadian period by opposing the action of CRY1. With CRY1, dispensable for circadian rhythm generation but necessary for the development of intercellular networks for rhythm synchrony. May mediate circadian regulation of cAMP signaling and gluconeogenesis by blocking glucagon-mediated increases in intracellular cAMP concentrations and in CREB1 phosphorylation. Besides its role in the maintenance of the circadian clock, is also involved in the regulation of other processes. Plays a key role in glucose and lipid metabolism modulation, in part, through the transcriptional regulation of genes involved in these pathways, such as LEP or ACSL4. Represses glucocorticoid receptor NR3C1/GR-induced transcriptional activity by binding to glucocorticoid response elements (GREs). Represses the CLOCK-BMAL1 induced transcription of BHLHE40/DEC1 and NAMPT. Represses PPARD and its target genes in the skeletal muscle and limits exercise capacity. Represses the transcriptional activity of NR1I2. The sequence is that of Cryptochrome-2 (Cry2) from Rattus norvegicus (Rat).